Reading from the N-terminus, the 212-residue chain is Ribonuclease HII (212 aa).

In terms of domain architecture, RNase H type-2 spans 20–209; the sequence is TCIVGVDEVG…VHNILYQEAS (190 aa). Residues Asp-26, Glu-27, and Asp-117 each contribute to the a divalent metal cation site.

The protein belongs to the RNase HII family. Requires Mn(2+) as cofactor. Mg(2+) is required as a cofactor.

The protein resides in the cytoplasm. It catalyses the reaction Endonucleolytic cleavage to 5'-phosphomonoester.. In terms of biological role, endonuclease that specifically degrades the RNA of RNA-DNA hybrids. The polypeptide is Ribonuclease HII (Cereibacter sphaeroides (strain ATCC 17025 / ATH 2.4.3) (Rhodobacter sphaeroides)).